A 303-amino-acid polypeptide reads, in one-letter code: Thyrotroph embryonic factor (303 aa).

Disordered stretches follow at residues 1–63 (MSDA…KLEE) and 132–176 (ESAS…DPNC). Phosphoserine is present on serine 32. Positions 41–61 (KLMENPPREARLDKEKGKEKL) are enriched in basic and acidic residues. Over residues 133–160 (SASSSTASPPSSSTAIFQPSETVSSTES) the composition is skewed to low complexity. Residues 233 to 296 (DEKYWTRRKK…GKCKTIVSKY (64 aa)) form the bZIP domain. A basic motif region spans residues 235 to 255 (KYWTRRKKNNVAAKRSRDARR). The interval 256–263 (LKENQITI) is leucine-zipper.

Belongs to the bZIP family. PAR subfamily. In terms of assembly, binds DNA as a homodimer or a heterodimer. Can form a heterodimer with DBP.

The protein localises to the nucleus. Its function is as follows. Transcription factor that binds to and transactivates the TSHB promoter. Binds to a minimal DNA-binding sequence 5'-[TC][AG][AG]TTA[TC][AG]-3'. In Homo sapiens (Human), this protein is Thyrotroph embryonic factor (TEF).